We begin with the raw amino-acid sequence, 708 residues long: Ribosomal RNA large subunit methyltransferase K/L (708 aa).

In terms of domain architecture, THUMP spans 43–154; the sequence is QIYRCCLWSR…KENALLGIDM (112 aa).

The protein belongs to the methyltransferase superfamily. RlmKL family.

The protein localises to the cytoplasm. The enzyme catalyses guanosine(2445) in 23S rRNA + S-adenosyl-L-methionine = N(2)-methylguanosine(2445) in 23S rRNA + S-adenosyl-L-homocysteine + H(+). It catalyses the reaction guanosine(2069) in 23S rRNA + S-adenosyl-L-methionine = N(2)-methylguanosine(2069) in 23S rRNA + S-adenosyl-L-homocysteine + H(+). Functionally, specifically methylates the guanine in position 2445 (m2G2445) and the guanine in position 2069 (m7G2069) of 23S rRNA. This chain is Ribosomal RNA large subunit methyltransferase K/L, found in Vibrio cholerae serotype O1 (strain ATCC 39541 / Classical Ogawa 395 / O395).